The sequence spans 89 residues: Small ribosomal subunit protein uS15 (89 aa).

It belongs to the universal ribosomal protein uS15 family. Part of the 30S ribosomal subunit. Forms a bridge to the 50S subunit in the 70S ribosome, contacting the 23S rRNA.

In terms of biological role, one of the primary rRNA binding proteins, it binds directly to 16S rRNA where it helps nucleate assembly of the platform of the 30S subunit by binding and bridging several RNA helices of the 16S rRNA. Its function is as follows. Forms an intersubunit bridge (bridge B4) with the 23S rRNA of the 50S subunit in the ribosome. This Pectobacterium atrosepticum (strain SCRI 1043 / ATCC BAA-672) (Erwinia carotovora subsp. atroseptica) protein is Small ribosomal subunit protein uS15.